The sequence spans 229 residues: Octanoyltransferase (229 aa).

In terms of domain architecture, BPL/LPL catalytic spans 47 to 225; sequence PSSPEAVWIL…SLAARFHLAW (179 aa). Substrate is bound by residues 89–96, 156–158, and 169–171; these read RGGEVTHH, AIG, and GLA. The Acyl-thioester intermediate role is filled by Cys187.

It belongs to the LipB family.

It localises to the cytoplasm. It carries out the reaction octanoyl-[ACP] + L-lysyl-[protein] = N(6)-octanoyl-L-lysyl-[protein] + holo-[ACP] + H(+). It functions in the pathway protein modification; protein lipoylation via endogenous pathway; protein N(6)-(lipoyl)lysine from octanoyl-[acyl-carrier-protein]: step 1/2. In terms of biological role, catalyzes the transfer of endogenously produced octanoic acid from octanoyl-acyl-carrier-protein onto the lipoyl domains of lipoate-dependent enzymes. Lipoyl-ACP can also act as a substrate although octanoyl-ACP is likely to be the physiological substrate. This chain is Octanoyltransferase, found in Synechococcus sp. (strain CC9902).